We begin with the raw amino-acid sequence, 146 residues long: Hemoglobin subunit beta (146 aa).

The Globin domain occupies 2–146; sequence HWTAEEKQLI…VAHALARKYH (145 aa). 2 residues coordinate heme b: histidine 63 and histidine 92.

This sequence belongs to the globin family. Heterotetramer of two alpha chains and two beta chains. As to expression, red blood cells.

Involved in oxygen transport from the lung to the various peripheral tissues. The polypeptide is Hemoglobin subunit beta (HBB) (Aquila chrysaetos (Golden eagle)).